The primary structure comprises 92 residues: Small ribosomal subunit protein bS20 (92 aa).

Positions 1 to 23 are disordered; it reads MANSPSAKKRAKQAEKRRSHNAS. Over residues 7–20 the composition is skewed to basic residues; sequence AKKRAKQAEKRRSH.

The protein belongs to the bacterial ribosomal protein bS20 family.

Functionally, binds directly to 16S ribosomal RNA. This is Small ribosomal subunit protein bS20 from Ectopseudomonas mendocina (strain ymp) (Pseudomonas mendocina).